Consider the following 398-residue polypeptide: uncharacterized protein (398 aa).

Residues 240-306 (SLNKNIDQLI…SITVTTNDGS (67 aa)) form the BIG2 domain.

This is an uncharacterized protein from Clostridium acetobutylicum (strain ATCC 824 / DSM 792 / JCM 1419 / IAM 19013 / LMG 5710 / NBRC 13948 / NRRL B-527 / VKM B-1787 / 2291 / W).